Consider the following 318-residue polypeptide: tRNA dimethylallyltransferase (318 aa).

ATP is bound at residue 13-20; it reads GPTAVGKT. Substrate is bound at residue 15–20; that stretch reads TAVGKT. The tract at residues 38-41 is interaction with substrate tRNA; the sequence is DSMQ.

It belongs to the IPP transferase family. Monomer. Requires Mg(2+) as cofactor.

It carries out the reaction adenosine(37) in tRNA + dimethylallyl diphosphate = N(6)-dimethylallyladenosine(37) in tRNA + diphosphate. Catalyzes the transfer of a dimethylallyl group onto the adenine at position 37 in tRNAs that read codons beginning with uridine, leading to the formation of N6-(dimethylallyl)adenosine (i(6)A). In Bacillus pumilus (strain SAFR-032), this protein is tRNA dimethylallyltransferase.